Here is a 480-residue protein sequence, read N- to C-terminus: ATP-grasp enzyme ankG (480 aa).

The tract at residues 1 to 30 is disordered; it reads MYQISLKATKSAAEPTSSTDASHDDRQVER. A compositionally biased stretch (basic and acidic residues) spans 21–30; the sequence is ASHDDRQVER.

The catalysed reaction is NK13650 D + L-aspartate + ATP = NK13650 C + AMP + diphosphate + H(+). The enzyme catalyses NK13650 B + L-aspartate + ATP = NK13650 A + AMP + diphosphate + H(+). It functions in the pathway secondary metabolite biosynthesis. ATP-grasp enzyme; part of the ank cluster that mediates the biosynthesis of NK13650 C, a highly modified cyclo-arginine-tyrosine dipeptide. AnkG catalyzes the last step of the pathway via amidation NK13650 D with L-Asp to produce NK13650 C. AnkG also amidates NK13650 B into NK13650 A. Within the pathway, the cyclodipeptide synthase ankA acts as the scaffold-generating enzyme and is responsible for formation of the cyclo-Arg-Tyr diketopiperazine (cRY) from L-Arg and L-Tyr. The ankA product cRY is desaturated by the cytochrome P450 monooxygenase ankB to yield a dehydro-cyclodipeptide intermediate. The FAD-dependent monooxygenase ankC then installs the m-OH, ankD catalyzes the attachment of L-homoserine, and ankE ligates citrate to the ankD product to yield NK13650 B. The O-methyltransferase ankF is responsible for methylation of the C-17 phenol group of NK13650 B to produce NK13650 D. Amidation of NK13650 D with L-Asp by ankG then leads to the production of NK13650 C, whereas amidation of NK13650 B produces NK13650 A. The sequence is that of ATP-grasp enzyme ankG from Aspergillus thermomutatus (Neosartorya pseudofischeri).